The following is a 387-amino-acid chain: Enoyl-[acyl-carrier-protein] reductase 2, mitochondrial (387 aa).

Residues 1-23 (MYRNQLARASLRSTSSINQIRNM) constitute a mitochondrion transit peptide. Residue Tyr-79 is the Proton donor of the active site. Residues Asn-172, 199-202 (NSAV), 222-224 (RDR), 297-300 (YGGM), 322-324 (FWV), and Lys-382 contribute to the NADP(+) site.

This sequence belongs to the zinc-containing alcohol dehydrogenase family. Quinone oxidoreductase subfamily. As to quaternary structure, homodimer.

Its subcellular location is the mitochondrion matrix. It carries out the reaction a 2,3-saturated acyl-[ACP] + NADP(+) = a (2E)-enoyl-[ACP] + NADPH + H(+). Catalyzes the NADPH-dependent reduction of trans-2-enoyl thioesters in mitochondrial fatty acid synthesis (fatty acid synthesis type II). Fatty acid chain elongation in mitochondria uses acyl carrier protein (ACP) as an acyl group carrier, but the enzyme accepts both ACP and CoA thioesters as substrates in vitro. Required for respiration and the maintenance of the mitochondrial compartment. This Debaryomyces hansenii (strain ATCC 36239 / CBS 767 / BCRC 21394 / JCM 1990 / NBRC 0083 / IGC 2968) (Yeast) protein is Enoyl-[acyl-carrier-protein] reductase 2, mitochondrial (ETR2).